A 487-amino-acid polypeptide reads, in one-letter code: GTPase Der (487 aa).

2 EngA-type G domains span residues 3 to 166 (PVIA…PRDA) and 193 to 366 (IKIA…QSAV). Residues 9–16 (GRPNVGKS), 56–60 (DTGGI), 118–121 (NKID), 199–206 (GRPNVGKS), 246–250 (DTAGV), and 311–314 (NKWD) contribute to the GTP site. The 85-residue stretch at 367 to 451 (TRWPTSRLTQ…PIRIEYKGGE (85 aa)) folds into the KH-like domain. Basic and acidic residues predominate over residues 448–461 (KGGENPYEGKKNTL). Residues 448–487 (KGGENPYEGKKNTLTDRQVNKKRRLMSHHKKAEKKRRDKR) are disordered. Basic residues predominate over residues 467 to 487 (NKKRRLMSHHKKAEKKRRDKR).

It belongs to the TRAFAC class TrmE-Era-EngA-EngB-Septin-like GTPase superfamily. EngA (Der) GTPase family. As to quaternary structure, associates with the 50S ribosomal subunit.

GTPase that plays an essential role in the late steps of ribosome biogenesis. This chain is GTPase Der, found in Pseudomonas putida (strain ATCC 47054 / DSM 6125 / CFBP 8728 / NCIMB 11950 / KT2440).